The chain runs to 485 residues: Ribulose bisphosphate carboxylase large chain (485 aa).

Substrate-binding residues include asparagine 124 and threonine 174. The active-site Proton acceptor is the lysine 176. Substrate is bound at residue lysine 178. Mg(2+)-binding residues include lysine 202, aspartate 204, and glutamate 205. An N6-carboxylysine modification is found at lysine 202. The Proton acceptor role is filled by histidine 294. Residues arginine 295, histidine 327, and serine 379 each contribute to the substrate site.

This sequence belongs to the RuBisCO large chain family. Type I subfamily. Heterohexadecamer of 8 large chains and 8 small chains. Mg(2+) serves as cofactor.

It carries out the reaction 2 (2R)-3-phosphoglycerate + 2 H(+) = D-ribulose 1,5-bisphosphate + CO2 + H2O. It catalyses the reaction D-ribulose 1,5-bisphosphate + O2 = 2-phosphoglycolate + (2R)-3-phosphoglycerate + 2 H(+). In terms of biological role, ruBisCO catalyzes two reactions: the carboxylation of D-ribulose 1,5-bisphosphate, the primary event in carbon dioxide fixation, as well as the oxidative fragmentation of the pentose substrate. Both reactions occur simultaneously and in competition at the same active site. This Rhodopseudomonas palustris (strain TIE-1) protein is Ribulose bisphosphate carboxylase large chain.